The following is a 577-amino-acid chain: 5'-nucleotidase (577 aa).

Positions 1-30 (MPRVPSASATGSSALLSLLCAFSLGRAAPF) are cleaved as a signal peptide. Aspartate 39, histidine 41, aspartate 86, and asparagine 118 together coordinate Zn(2+). N-linked (GlcNAc...) asparagine glycosylation occurs at asparagine 135. Residues histidine 221 and histidine 244 each coordinate Zn(2+). Asparagine 246 contacts substrate. N-linked (GlcNAc...) asparagine glycosylation is found at asparagine 311 and asparagine 347. Disulfide bonds link cysteine 353/cysteine 358 and cysteine 365/cysteine 387. Residue arginine 354 participates in substrate binding. Residues glutamine 390 and arginine 395 each coordinate substrate. N-linked (GlcNAc...) asparagine glycosylation occurs at asparagine 403. Phenylalanine 417 provides a ligand contact to substrate. Cysteine 476 and cysteine 479 form a disulfide bridge. 500–506 (YIAEGGD) lines the substrate pocket. A lipid anchor (GPI-anchor amidated serine) is attached at serine 552. Positions 553–577 (ATLPIINLKIGLSLFAFLTWFLHCS) are cleaved as a propeptide — removed in mature form.

The protein belongs to the 5'-nucleotidase family. Homodimer. It depends on Zn(2+) as a cofactor.

The protein resides in the cell membrane. It catalyses the reaction a ribonucleoside 5'-phosphate + H2O = a ribonucleoside + phosphate. In terms of biological role, hydrolyzes extracellular nucleotides into membrane permeable nucleosides. This is 5'-nucleotidase from Diplobatis ommata (Ocellated electric ray).